A 548-amino-acid chain; its full sequence is Nonribosomal peptide synthetase 8 (548 aa).

Positions Met-1–Pro-77 constitute a Carrier domain. O-(pantetheine 4'-phosphoryl)serine is present on Ser-35. The tract at residues Met-122–Ala-537 is condensation.

Belongs to the NRP synthetase family.

Its pathway is mycotoxin biosynthesis. Nonribosomal peptide synthetase; part of the gene cluster that mediates the biosynthesis of fumonisins B1 (FB1), B2 (FB2), B3 (FB3), and B4 (FB4), which are carcinogenic mycotoxins. Within the pathway FUM14 catalyzes esterification of CoA-activated tricarballylic acid to the C-14 and C-15 hydroxyls of the fumonisin backbone. The biosynthesis starts with the FUM1-catalyzed carbon chain assembly from one molecule of acetyl-CoA, eight molecules of malonyl-CoA, and two molecules of methionine (in S-adenosyl form). The C18 polyketide chain is released from the enzyme by a nucleophilic attack of a carbanion, which is derived from R-carbon of alanine by decarboxylation, on the carbonyl carbon of polyketide acyl chain. This step is catalyzed by the pyridoxal 5'-phosphate-dependent aminoacyl transferase FUM8. The resultant 3-keto intermediate is then stereospecifically reduced to a 3-hydroxyl product by reductase FUM13. Subsequent oxidations at C-10 by the cytochrome P450 monooxygenase FUM2, C-14 and C-15 by FUM6, FUM12 or FUM15, tricarballylic esterification of the hydroxyl groups on C-14 and C-15 by acyltransferase FUM14, and C-5 hydroxylation by 2-keto-glutarate-dependent dioxygenase FUM3 furnish the biosynthesis of fumonisins. The tricarballylic moieties are most likely derived from the citric acid cycle, and their addition to the carbon backbone may involve FUM7, FUM10, FUM11 and FUM14. This chain is Nonribosomal peptide synthetase 8, found in Gibberella moniliformis (strain M3125 / FGSC 7600) (Maize ear and stalk rot fungus).